A 158-amino-acid chain; its full sequence is Mitotic-spindle organizing protein 2B (158 aa).

A Phosphoserine modification is found at Ser34. The interval 84–158 is disordered; the sequence is RLASEPQDPA…PGKSPTRGST (75 aa). Residues 111–122 show a composition bias toward low complexity; that stretch reads GSAALGGALALA. Polar residues predominate over residues 128 to 140; sequence EGSSQRMPRQPSA. Phosphoserine is present on Ser152.

It belongs to the MOZART2 family. Associates with the gamma-tubulin ring complex (gTuRC) consisting of TUBGCP2, TUBGCP3, TUBGCP4, TUBGCP5 and TUBGCP6 and gamma-tubulin TUBG1 or TUBG2; within the complex, interacts with TUBGCP2; the interaction plays a role in gTuRC activation. Interacts with TUBG1.

The protein resides in the cytoplasm. Its subcellular location is the cytoskeleton. It is found in the microtubule organizing center. The protein localises to the centrosome. It localises to the spindle. Functionally, required for the recruitment and the assembly of the gamma-tubulin ring complex (gTuRC) at the centrosome. The gTuRC regulates the minus-end nucleation of alpha-beta tubulin heterodimers that grow into microtubule protafilaments, a critical step in centrosome duplication and spindle formation. The protein is Mitotic-spindle organizing protein 2B (MZT2B) of Homo sapiens (Human).